The primary structure comprises 98 residues: Defensin (98 aa).

3 disulfide bridges follow: Cys-61/Cys-88, Cys-74/Cys-94, and Cys-78/Cys-96.

This sequence belongs to the invertebrate defensin family. Type 1 subfamily.

In Mamestra brassicae (Cabbage moth), this protein is Defensin.